Reading from the N-terminus, the 241-residue chain is MRLSEILAVALVTGATAYDLPDNLKQIYEKHKGKCSKVYQKGFTNGGHSDGKSFEYCGDIEGAIFMHSSAKGGQYTNMDVDCDGANNSAGKCSNDPSGQGVTAFKDEVKKFGIPDLDANLHPYIVFGNEEHSPQFKPQKYGMEPLSVMAVVCNGKLHYGIWGDTNGGTSTGEASLSMAELCFPEEKPDGDHGHDDNDVLYIGFTGKDAVPGKSANWKAKKTEDFEDSIKSIGDKLVAGLKA.

Residues 1–17 (MRLSEILAVALVTGATA) form the signal peptide. An N-linked (GlcNAc...) asparagine glycan is attached at Asn86.

This sequence belongs to the glycosyl hydrolase 75 family.

It localises to the secreted. It carries out the reaction Endohydrolysis of beta-(1-&gt;4)-linkages between D-glucosamine residues in a partly acetylated chitosan.. Chitosanase catalyzing the endo-type cleavage of chitosan, the deacylated form of chitin. Chitosanase may be crucial in the degradation of the deacetylated portion of chitin in the fungal cell wall. Chitoolisaccharides produced by the hydrolysis of partially N-acetylated chitosan are known to have many biological activities, including antibacterial activity, immune-enhancing effects, and elicitor activity. This is Endo-chitosanase B (csnB) from Aspergillus oryzae (strain ATCC 42149 / RIB 40) (Yellow koji mold).